The chain runs to 148 residues: CDC25-like phosphatase YCH1 (148 aa).

Met-1 carries the N-acetylmethionine modification. Residues 29–137 enclose the Rhodanese domain; sequence LREPFQVVDV…WQSVYGDDES (109 aa).

Belongs to the MPI phosphatase family.

The protein localises to the cytoplasm. It localises to the nucleus. Its function is as follows. Protein phosphatase. This Saccharomyces cerevisiae (strain ATCC 204508 / S288c) (Baker's yeast) protein is CDC25-like phosphatase YCH1 (YCH1).